Here is a 288-residue protein sequence, read N- to C-terminus: Lysosomal thioesterase PPT2-B (288 aa).

Residues 1-20 (MRGYLLLLPLLLCLVDNSVS) form the signal peptide. A disulfide bond links Cys-95 and Cys-103. Ser-97 acts as the Nucleophile in catalysis. N-linked (GlcNAc...) asparagine glycosylation is present at Asn-143. Residues Cys-151 and Cys-162 are joined by a disulfide bond. The N-linked (GlcNAc...) asparagine glycan is linked to Asn-192. Catalysis depends on residues Asp-214 and His-269. Asn-275 is a glycosylation site (N-linked (GlcNAc...) asparagine).

The protein belongs to the palmitoyl-protein thioesterase family.

It is found in the lysosome. It carries out the reaction hexadecanoyl-CoA + H2O = hexadecanoate + CoA + H(+). The enzyme catalyses S-hexadecanoyl-N-acetylcysteamine + H2O = N-acetylcysteamine + hexadecanoate + H(+). In terms of biological role, catalyzes the cleavage of thioester bonds from S-palmitoyl-CoA or S-palmitoyl-N-acetylcysteamine (unbranched structures) but does not have activity against palmitoylcysteine or palmitoylated proteins, branched structures or bulky head groups. Conversely, hydrolyzes both long and short chain fatty acyl-CoA substrate. In Xenopus laevis (African clawed frog), this protein is Lysosomal thioesterase PPT2-B (ppt2-b).